The chain runs to 499 residues: Phenylalanine--tRNA ligase alpha subunit (499 aa).

Residues Thr342, 381–383 (QID), and Phe422 each bind L-phenylalanine. Residue Glu424 coordinates Mg(2+). Phe447 contributes to the L-phenylalanine binding site.

The protein belongs to the class-II aminoacyl-tRNA synthetase family. Phe-tRNA synthetase alpha subunit type 2 subfamily. Tetramer of two alpha and two beta subunits. Requires Mg(2+) as cofactor.

It is found in the cytoplasm. It carries out the reaction tRNA(Phe) + L-phenylalanine + ATP = L-phenylalanyl-tRNA(Phe) + AMP + diphosphate + H(+). This is Phenylalanine--tRNA ligase alpha subunit from Pyrococcus horikoshii (strain ATCC 700860 / DSM 12428 / JCM 9974 / NBRC 100139 / OT-3).